The following is an 860-amino-acid chain: Leucine--tRNA ligase (860 aa).

Residues 42–52 (PYPSGRLHMGH) carry the 'HIGH' region motif. Residues 619-623 (KMSKS) carry the 'KMSKS' region motif. Lys622 lines the ATP pocket.

The protein belongs to the class-I aminoacyl-tRNA synthetase family.

It is found in the cytoplasm. It catalyses the reaction tRNA(Leu) + L-leucine + ATP = L-leucyl-tRNA(Leu) + AMP + diphosphate. The chain is Leucine--tRNA ligase from Pectobacterium carotovorum subsp. carotovorum (strain PC1).